The primary structure comprises 576 residues: Probable lysosomal cobalamin transporter (576 aa).

Helical transmembrane passes span L8–I28, V40–P60, Y98–W118, T145–A165, V188–T208, L312–T332, G347–A367, L377–I397, L419–V439, and F503–L523. Residues R549–G576 form a disordered region. Over residues T561–G576 the composition is skewed to polar residues. Residue N570 is glycosylated (N-linked (GlcNAc...) asparagine).

The protein belongs to the LIMR family. LMBRD1 subfamily.

It is found in the lysosome membrane. Functionally, probable lysosomal cobalamin transporter. Required to export cobalamin from lysosomes allowing its conversion to cofactors. The chain is Probable lysosomal cobalamin transporter from Aspergillus niger (strain ATCC MYA-4892 / CBS 513.88 / FGSC A1513).